The primary structure comprises 414 residues: TAR DNA-binding protein 43 (414 aa).

Residues lysine 79, lysine 84, lysine 95, lysine 102, and lysine 181 each participate in a glycyl lysine isopeptide (Lys-Gly) (interchain with G-Cter in SUMO2) cross-link. Positions 82-98 (KRKMDETDASSAVKVKR) match the Nuclear localization signal motif. 2 RRM domains span residues 104 to 200 (SDLI…RCTE) and 191 to 262 (RKVF…NAEP). Serine 183 bears the Phosphoserine mark. The segment at 216–414 (DVMDVFIPKP…MDSKSSGWGM (199 aa)) is interaction with UBQLN2. The Nuclear export signal signature appears at 239 to 250 (IAQSLCGEDLII). The span at 261–274 (EPKHNSNRQLERSG) shows a compositional bias: basic and acidic residues. Disordered stretches follow at residues 261–303 (EPKH…GNNQ) and 341–373 (ASQQ…GNNS). Lysine 263 participates in a covalent cross-link: Glycyl lysine isopeptide (Lys-Gly) (interchain with G-Cter in SUMO2). Residues 275–303 (RFGGNPGGFGNQGGFGNSRGGGAGLGNNQ) show a composition bias toward gly residues. Residue serine 292 is modified to Phosphoserine. The residue at position 293 (arginine 293) is an Omega-N-methylarginine. The span at 342–358 (SQQNQSGPSGNNQNQGN) shows a compositional bias: low complexity.

As to quaternary structure, homodimer. Homooligomer (via its N-terminal domain). Interacts with BRDT. Binds specifically to pyrimidine-rich motifs of TAR DNA and to single stranded TG repeated sequences. Binds to RNA, specifically to UG repeated sequences with a minimum of six contiguous repeats. Interacts with ATXN2; the interaction is RNA-dependent. Interacts with MATR3. Interacts with UBQLN2. Interacts with HNRNPA2B1. Interacts with ZNF106. Interacts with CNOT7/CAF1. Interacts with CRY2. Interacts with PPIA/CYPA; the interaction is dependent on RNA-binding activity of TARDBP and PPIase activity of PPIA/CYPA and acetylation of PPIA/CYPA at 'Lys-125' favors the interaction. Post-translationally, hyperphosphorylated in hippocampus, neocortex, and spinal cord from individuals affected with ALS and FTLDU. Phosphorylated upon cellular stress. Ubiquitinated in hippocampus, neocortex, and spinal cord from individuals affected with ALS and FTLDU. In terms of processing, cleaved to generate C-terminal fragments in hippocampus, neocortex, and spinal cord from individuals affected with ALS and FTLDU. Ubiquitously expressed. In particular, expression is high in pancreas, placenta, lung, genital tract and spleen.

Its subcellular location is the nucleus. It localises to the cytoplasm. It is found in the stress granule. The protein resides in the mitochondrion. Functionally, RNA-binding protein that is involved in various steps of RNA biogenesis and processing. Preferentially binds, via its two RNA recognition motifs RRM1 and RRM2, to GU-repeats on RNA molecules predominantly localized within long introns and in the 3'UTR of mRNAs. In turn, regulates the splicing of many non-coding and protein-coding RNAs including proteins involved in neuronal survival, as well as mRNAs that encode proteins relevant for neurodegenerative diseases. Plays a role in maintaining mitochondrial homeostasis by regulating the processing of mitochondrial transcripts. Also regulates mRNA stability by recruiting CNOT7/CAF1 deadenylase on mRNA 3'UTR leading to poly(A) tail deadenylation and thus shortening. In response to oxidative insult, associates with stalled ribosomes localized to stress granules (SGs) and contributes to cell survival. Also participates in the normal skeletal muscle formation and regeneration, forming cytoplasmic myo-granules and binding mRNAs that encode sarcomeric proteins. Plays a role in the maintenance of the circadian clock periodicity via stabilization of the CRY1 and CRY2 proteins in a FBXL3-dependent manner. Negatively regulates the expression of CDK6. Regulates the expression of HDAC6, ATG7 and VCP in a PPIA/CYPA-dependent manner. This chain is TAR DNA-binding protein 43, found in Homo sapiens (Human).